Consider the following 87-residue polypeptide: Omega-lycotoxin-Am1a (87 aa).

The signal sequence occupies residues 1–17 (MKLSIFFVLFFIAIAYC). Positions 18-40 (QPEFLDDEEDEVEETLPVAEEGR) are excised as a propeptide. Cystine bridges form between Cys44–Cys59, Cys51–Cys64, Cys58–Cys84, and Cys66–Cys82.

Belongs to the neurotoxin omega-lctx family. In terms of tissue distribution, expressed by the venom gland.

It localises to the secreted. Its function is as follows. Modulates Cav2.1/CACNA1A voltage-gated calcium channels (P/Q-type currents) in rat cerebellar Purkinje cells and hippocampal CA1-CA3 neurons. At saturating concentrations (&gt;10 nM) decelerates activation kinetics and slightly increases peak amplitude without affecting deactivation kinetics. In vivo, does not cause death when intravenously injected into mice. In rat models, through its activity on Cav2.1/CACNA1A, has an ameliorative effect on memory defects provoked by hyperstimulation of N-methyl-D-aspartate receptors (NMDARs) in the hippocampus. The polypeptide is Omega-lycotoxin-Am1a (Alopecosa marikovskyi (Wolf spider)).